We begin with the raw amino-acid sequence, 470 residues long: 4-O-methyltransferase 1 (470 aa).

S-adenosyl-L-methionine is bound by residues 274-275 (GG), D297, 328-329 (DC), and K344. H348 functions as the Proton acceptor in the catalytic mechanism.

Belongs to the class I-like SAM-binding methyltransferase superfamily. Cation-independent O-methyltransferase family. COMT subfamily.

Its function is as follows. S-adenosyl-L-methionine-dependent methyltransferase that preferentially catalyzes the methylation of 4-OH phenolic compounds like coniferyl alcohol, vanillyl alcohol and ferrulic acid. May play a role in promoting lignin degradation by methylating and inactivating free-hydroxyl phenolic compounds, products of lignin cleavage which are known inhibitors of lignin peroxidases. This is 4-O-methyltransferase 1 from Phanerochaete chrysosporium (strain RP-78 / ATCC MYA-4764 / FGSC 9002) (White-rot fungus).